The chain runs to 114 residues: Large ribosomal subunit protein uL18 (114 aa).

Belongs to the universal ribosomal protein uL18 family. Part of the 50S ribosomal subunit; part of the 5S rRNA/L5/L18/L25 subcomplex. Contacts the 23S rRNA. Contacts protein L27 and the 5S rRNA.

In terms of biological role, this is one of the proteins that bind and probably mediate the attachment of the 5S RNA into the large ribosomal subunit, where it forms part of the central protuberance. In Deinococcus radiodurans (strain ATCC 13939 / DSM 20539 / JCM 16871 / CCUG 27074 / LMG 4051 / NBRC 15346 / NCIMB 9279 / VKM B-1422 / R1), this protein is Large ribosomal subunit protein uL18 (rplR).